A 255-amino-acid polypeptide reads, in one-letter code: Taurine import ATP-binding protein TauB (255 aa).

The ABC transporter domain occupies 2 to 229; sequence LQISHLYADY…RFVAGESSRS (228 aa). Residue 34-41 participates in ATP binding; it reads GPSGCGKT.

Belongs to the ABC transporter superfamily. Taurine importer (TC 3.A.1.17.1) family. In terms of assembly, the complex is composed of two ATP-binding proteins (TauB), two transmembrane proteins (TauC) and a solute-binding protein (TauA).

The protein localises to the cell inner membrane. It catalyses the reaction taurine(out) + ATP + H2O = taurine(in) + ADP + phosphate + H(+). Functionally, part of the ABC transporter complex TauABC involved in taurine import. Responsible for energy coupling to the transport system. This Shigella dysenteriae serotype 1 (strain Sd197) protein is Taurine import ATP-binding protein TauB.